Here is a 150-residue protein sequence, read N- to C-terminus: MIIEEIQGNIANLSQDEKQKHVEKVYLENSDLVKRIQRVKTDHGNEIGIRLKQPIDLQYGDILYQDDTNMIIVDVNSEDLLVIKPRNLKEMGDIAHQLGNRHLPAQFTETEMLIQYDYLVEDLLKELGIPYSHEDRKVNQAFRHIGHSHD.

This sequence belongs to the UreE family.

The protein localises to the cytoplasm. Its function is as follows. Involved in urease metallocenter assembly. Binds nickel. Probably functions as a nickel donor during metallocenter assembly. This chain is Urease accessory protein UreE, found in Staphylococcus epidermidis (strain ATCC 35984 / DSM 28319 / BCRC 17069 / CCUG 31568 / BM 3577 / RP62A).